The sequence spans 1041 residues: FHIP family protein GF15501 (1041 aa).

Disordered stretches follow at residues 797–856 (RKGN…NKRR) and 907–987 (SNSS…SEPV). Ser-803 carries the post-translational modification Phosphoserine. The segment covering 808-824 (NLQQQQALNPAQQQGQQ) has biased composition (low complexity). 2 stretches are compositionally biased toward polar residues: residues 825-843 (RSAY…TPTS) and 907-933 (SNSS…LSTQ). A compositionally biased stretch (low complexity) spans 942–973 (SGSSSNSSMGGSSQTLSAHSNATTTHSSSTLH).

The protein belongs to the FHIP family.

The sequence is that of FHIP family protein GF15501 from Drosophila ananassae (Fruit fly).